A 294-amino-acid chain; its full sequence is Phosphatidylserine decarboxylase proenzyme (294 aa).

Active-site charge relay system; for autoendoproteolytic cleavage activity residues include Asp113, His169, and Ser256. Residue Ser256 is the Schiff-base intermediate with substrate; via pyruvic acid; for decarboxylase activity of the active site. Pyruvic acid (Ser); by autocatalysis is present on Ser256.

The protein belongs to the phosphatidylserine decarboxylase family. PSD-B subfamily. Prokaryotic type II sub-subfamily. As to quaternary structure, heterodimer of a large membrane-associated beta subunit and a small pyruvoyl-containing alpha subunit. The cofactor is pyruvate. Post-translationally, is synthesized initially as an inactive proenzyme. Formation of the active enzyme involves a self-maturation process in which the active site pyruvoyl group is generated from an internal serine residue via an autocatalytic post-translational modification. Two non-identical subunits are generated from the proenzyme in this reaction, and the pyruvate is formed at the N-terminus of the alpha chain, which is derived from the carboxyl end of the proenzyme. The autoendoproteolytic cleavage occurs by a canonical serine protease mechanism, in which the side chain hydroxyl group of the serine supplies its oxygen atom to form the C-terminus of the beta chain, while the remainder of the serine residue undergoes an oxidative deamination to produce ammonia and the pyruvoyl prosthetic group on the alpha chain. During this reaction, the Ser that is part of the protease active site of the proenzyme becomes the pyruvoyl prosthetic group, which constitutes an essential element of the active site of the mature decarboxylase.

The protein resides in the cell membrane. The enzyme catalyses a 1,2-diacyl-sn-glycero-3-phospho-L-serine + H(+) = a 1,2-diacyl-sn-glycero-3-phosphoethanolamine + CO2. It functions in the pathway phospholipid metabolism; phosphatidylethanolamine biosynthesis; phosphatidylethanolamine from CDP-diacylglycerol: step 2/2. Catalyzes the formation of phosphatidylethanolamine (PtdEtn) from phosphatidylserine (PtdSer). In Clostridium perfringens (strain ATCC 13124 / DSM 756 / JCM 1290 / NCIMB 6125 / NCTC 8237 / Type A), this protein is Phosphatidylserine decarboxylase proenzyme.